We begin with the raw amino-acid sequence, 147 residues long: Large ribosomal subunit protein uL15 (147 aa).

Basic and acidic residues predominate over residues 1–20 (MTLRLNDLKPADGARTERTR). A disordered region spans residues 1–61 (MTLRLNDLKP…GFEGGQTPMQ (61 aa)). Residues 23–33 (RGIGSGLGKTA) are compositionally biased toward gly residues. A compositionally biased stretch (basic residues) spans 34–47 (GRGHKGSFARKGGG).

The protein belongs to the universal ribosomal protein uL15 family. As to quaternary structure, part of the 50S ribosomal subunit.

In terms of biological role, binds to the 23S rRNA. This chain is Large ribosomal subunit protein uL15, found in Xanthomonas axonopodis pv. citri (strain 306).